A 605-amino-acid chain; its full sequence is MANIIILDEFTAGQIAAGEVVERPVSVVKELVENSIDAGAGRIVVELEGGGLQAISVLDDGCGMSEEDLVLAFQRHATSKIKCSDDLNRITTLGFRGEALPSIAAVSKITVATRTRDALAGTRAEFAGGELIGKGPIGCPPGTSITVRDLFYNTPARRKAMKAPSAEGALCGGLISRLALARPEICFEVGIKGRRVFYSPGSGNLIDSLAAVYGRQIAAEMIAVKAVAEGLSINGYLGKPSLSRSTRSHITVIINGRYVRCPAIAEAIEGAYGTLLSRGRRPVAVLSLSVSPELLDVNIHPAKLEVRLLEEEKTASLLAGILKDALADKAVIPSAGNFRQAALRLENNKPGAEIFDGLGAGIIKTPGGGSSDRHVPGDKKNIQECLTLPDAHEYVADRVWVREAEDTPAYGNKVEKLPVLNALAHFPPVYILAGGEDGLYIVDQHAAHERIIYEEILSSGRTRPSQYLLVPVMLELDYREASILIERIIWFTDAGFVIEHFGGNTFLLRGVPFELPAGQEREIILDLLDYFESKGTGAGMTDFFKWAAASIACRSAVRAGEKLSLPSMNALLQRLSGTASPYTCPHGRPVVIKLSFRELELRFRR.

The protein belongs to the DNA mismatch repair MutL/HexB family.

Functionally, this protein is involved in the repair of mismatches in DNA. It is required for dam-dependent methyl-directed DNA mismatch repair. May act as a 'molecular matchmaker', a protein that promotes the formation of a stable complex between two or more DNA-binding proteins in an ATP-dependent manner without itself being part of a final effector complex. This Pelotomaculum thermopropionicum (strain DSM 13744 / JCM 10971 / SI) protein is DNA mismatch repair protein MutL.